The following is a 129-amino-acid chain: Short-chain dehydrogenase/reductase homolog YusR (129 aa).

This sequence belongs to the short-chain dehydrogenases/reductases (SDR) family.

This chain is Short-chain dehydrogenase/reductase homolog YusR (yusR), found in Bacillus subtilis (strain 168).